Here is a 415-residue protein sequence, read N- to C-terminus: G-protein coupled receptor daf-38 (415 aa).

Residues 1-19 (MLLPSNLTTSTLMTSSSES) are compositionally biased toward low complexity. The tract at residues 1-25 (MLLPSNLTTSTLMTSSSESYDADNP) is disordered. The Extracellular portion of the chain corresponds to 1-35 (MLLPSNLTTSTLMTSSSESYDADNPGLPPEPILSD). A helical membrane pass occupies residues 36–56 (YVEMFTLVLNFIVGAPLNLAA). At 57–75 (YTQLSERPTSTRLDLLKRS) the chain is on the cytoplasmic side. Residues 76–96 (LNYSDLLVLFIYVPSRACWLL) traverse the membrane as a helical segment. Over 97–108 (TYDWRGGDALCK) the chain is Extracellular. Residues cysteine 107 and cysteine 187 are joined by a disulfide bond. The helical transmembrane segment at 109 to 129 (IVKMFHTFAFQSSSNVIVCIA) threads the bilayer. Over 130-152 (VDRLLSVLSPSHHSPNKALKRTK) the chain is Cytoplasmic. Residues 153-173 (MMLIVAWIVALVISCPQLFIW) traverse the membrane as a helical segment. Topologically, residues 174–222 (KAYLALPEYNWSQCLQIWEIARMEKFNKPQVVPEFDAEFWYSILHISLV) are extracellular. The chain crosses the membrane as a helical span at residues 223–243 (FWIPCIIIMLSYIIVISWVWI). Residues 244–345 (NSRPSIRHTS…NLNRSRALRV (102 aa)) lie on the Cytoplasmic side of the membrane. The helical transmembrane segment at 346–366 (SLLLVVAYIICWLPYNLISLI) threads the bilayer. The Extracellular segment spans residues 367-382 (QFLDRDFFSSYLKHVH). Residues 383 to 403 (FCQQLIIFNSVVNPWLYGFFG) traverse the membrane as a helical segment. The Cytoplasmic segment spans residues 404–415 (PRRPSTTGAGRH).

Belongs to the G-protein coupled receptor 1 family. Heterodimer; with daf-37. In terms of tissue distribution, expressed in the ASI and ASK chemosensory neurons and in the IL-2 interneurons, but weakly expressed in other head neurons in hermaphrodites.

It localises to the cell membrane. Its function is as follows. G-protein coupled receptor (GPCR) that forms a heterodimer with daf-37 to control dauer formation and behavior. Required for the response to dauer inducing pheromones such as the ascarosides ascr#2, ascr#3 and ascr#5. This Caenorhabditis elegans protein is G-protein coupled receptor daf-38.